A 218-amino-acid polypeptide reads, in one-letter code: Elongation factor Ts (218 aa).

The interval 82 to 85 (TDFV) is involved in Mg(2+) ion dislocation from EF-Tu.

The protein belongs to the EF-Ts family.

It localises to the cytoplasm. In terms of biological role, associates with the EF-Tu.GDP complex and induces the exchange of GDP to GTP. It remains bound to the aminoacyl-tRNA.EF-Tu.GTP complex up to the GTP hydrolysis stage on the ribosome. The chain is Elongation factor Ts from Prochlorococcus marinus (strain MIT 9303).